Consider the following 410-residue polypeptide: WD repeat and FYVE domain-containing protein 1 (410 aa).

6 WD repeats span residues 22 to 61, 66 to 105, 112 to 150, 153 to 192, 197 to 236, and 240 to 279; these read GHQDAVTAALLIPKEDGVITASEDRTIRVWLKRDSGQYWP, TMASPCSAMAYHHDSRRIFVGQDNGAVMEFHVSEDFNKMN, AHQNRVSAIIFSLATEWVISTGHDKCVSWMCTRSGNMLG, FFTSWASCLQYDFDTQYAFVGDYSGQITLLKLEQNTCSVI, GHEGSVACLWWDPIQRLLFSGASDNSIIMWDIGGRKGRTL, and GHHDKVQSLCYLQLTRQLVSCSSDGGIAVWNMDVSREEAP. The FYVE-type zinc-finger motif lies at 281–352; the sequence is WLESDSCQKC…VCDSCYDSIK (72 aa). Positions 287, 290, 314, 317, 322, 325, 344, and 347 each coordinate Zn(2+). The stretch at 364–403 is one WD 7 repeat; the sequence is EGKHNISHMSMDIARGLMVTCGTDRIVKIWDMTPVVGCSL. The residue at position 408 (Ser-408) is a Phosphoserine.

Binds PtdIns3P in vitro with high specificity over other phosphoinositides. Interacts (via WD repeat 2) with tyrosine-phosphorylated TLR3 (via TIR domain) in response to poly(I:C). Interacts with TICAM1 in response to poly(I:C). Interacts with TLR4 in response to LPS.

Its subcellular location is the early endosome. Functionally, positively regulates TLR3- and TLR4-mediated signaling pathways by bridging the interaction between TLR3 or TLR4 and TICAM1. Promotes TLR3/4 ligand-induced activation of transcription factors IRF3 and NF-kappa-B, as well as the production of IFN-beta and inflammatory cytokines. This is WD repeat and FYVE domain-containing protein 1 (WDFY1) from Homo sapiens (Human).